A 165-amino-acid polypeptide reads, in one-letter code: Large ribosomal subunit protein uL15 (165 aa).

The tract at residues 1–44 (MSLNQLKAPRGANRAKKRVGRGQGSGLGKTAGRGGKGQKARSGN) is disordered. Positions 21–37 (RGQGSGLGKTAGRGGKG) are enriched in gly residues.

This sequence belongs to the universal ribosomal protein uL15 family. As to quaternary structure, part of the 50S ribosomal subunit.

Its function is as follows. Binds to the 23S rRNA. The chain is Large ribosomal subunit protein uL15 from Anaeromyxobacter dehalogenans (strain 2CP-1 / ATCC BAA-258).